The following is a 596-amino-acid chain: MSQSHSILSSLILLVAIIFCVPHVIAVPWTTDGHAQLSPVTPRYPTQEPSGIRYRNVIPQLTWLCDTAIEKIFGLPPKVAKKPDVPGNVARPTNAQLPATLLAKYGGDVVLRFNLTTPAEEQALAEAADTLFLDIWEFTSNWADIRLREDDVPSLLGLLPKSLQNAYSHLMPDLAKSIYQSYPSMAYADAAFSSKHVERAFTPALRTSKVEGADNIFFQNYQPLSVIIPWMRLMSSMFSTHVRMINIGISYEGRDIPALRIGVSPNLPSEATKPRKTIILSGGFHAREWISVSSVTYAAWSLITSYGKSPAITKLLQEFDFVLVPTINVDGYVYTWENDRLWRKNRQQTNLRFCRGLDLDRGFGFEWGSSTQTNPCSESYPGDAPFQAVESHRFAEWAKNETENNNVHFVGFLDLHSYSQQVLYPYSYSCLADPPSLENLEELGIGLAKAIRISSGEQYTVASACEGAISSKIPGYSSTSRMEMGGGSAIDWFYHELGVRYSYQIKLRDTGSYGFLLPKENIVPTGEEVFNVIKYFGDFLLGDKGIEKAKSSEEEPITKPVKSELPLGVMEEESVISDEIEDEYEDINLELKRRRR.

A signal peptide spans 1–26 (MSQSHSILSSLILLVAIIFCVPHVIA). Residues 27–190 (VPWTTDGHAQ…SYPSMAYADA (164 aa)) constitute a propeptide that is removed on maturation. Asparagine 114 carries N-linked (GlcNAc...) asparagine glycosylation. The Peptidase M14 domain maps to 220–540 (NYQPLSVIIP…NVIKYFGDFL (321 aa)). Zn(2+) contacts are provided by histidine 285 and glutamate 288. Substrate-binding positions include 285–288 (HARE), arginine 343, and 360–361 (DR). Cysteine 354 and cysteine 376 form a disulfide bridge. Asparagine 400 is a glycosylation site (N-linked (GlcNAc...) asparagine). Histidine 416 contributes to the Zn(2+) binding site. Residue 417–418 (SY) coordinates substrate.

This sequence belongs to the peptidase M14 family. It depends on Zn(2+) as a cofactor.

It is found in the vacuole. Its subcellular location is the secreted. Inactive carboxypeptidase that may play a role in cell wall organization and biogenesis. In Sclerotinia sclerotiorum (strain ATCC 18683 / 1980 / Ss-1) (White mold), this protein is Inactive metallocarboxypeptidase ecm14 (ecm14).